The sequence spans 759 residues: Protein MTSS 1 (759 aa).

One can recognise an IMD domain in the interval 1 to 254; that stretch reads MEAVIEKECS…EQVILDLKGS (254 aa). A coiled-coil region spans residues 108–157; it reads LQEQMEEWKKVANQLDKDHAKEYKKARQEIKNKSSDTLKLQKKAKKVDAQ. Positions 259–309 are disordered; that stretch reads SYQTPPSSPSTTMSRKSSVCSSLNSVNSSDSRSSGSHSHSPSSHYRYRSSN. A Phosphothreonine modification is found at Thr262. Phosphoserine is present on residues Ser265, Ser266, Ser275, and Ser326. The interval 331 to 354 is disordered; sequence QDAFQSKSPSPMPPEAANQLSNGF. Thr429 carries the post-translational modification Phosphothreonine. 2 disordered regions span residues 431 to 472 and 569 to 759; these read QRRK…AATR and KRPA…PRFS. A Phosphothreonine modification is found at Thr607. Residues 612–627 are compositionally biased toward low complexity; it reads PIPIKTPVIPVKTPTV. Phosphoserine occurs at positions 648 and 651. The span at 660–670 shows a compositional bias: polar residues; sequence GVSNIPSSLWS. Residues 675 to 685 show a composition bias toward pro residues; that stretch reads VNPPLPGPKPS. One can recognise a WH2 domain in the interval 731–748; that stretch reads QGEDMLNAIRRGVKLKKT.

Belongs to the MTSS family. As to quaternary structure, binds to actin. In terms of tissue distribution, strongly expressed in the developing neurons and skeletal and cardiac muscles in embryos. Strongly expressed also in liver, outer layers of the kidney, and in the Purkinje cells of the brain.

The protein resides in the cytoplasm. It localises to the cytoskeleton. Its function is as follows. Inhibits the nucleation of actin filaments in vitro. This is Protein MTSS 1 from Mus musculus (Mouse).